Consider the following 322-residue polypeptide: p55-v-Fos-transforming protein (322 aa).

Residues 69-95 (APGGRGQSIGRRGKVEQLSPEEEEKRR) are disordered. In terms of domain architecture, bZIP spans 91–154 (EEKRRIRRER…EKLEFILAAH (64 aa)). A basic motif region spans residues 93-113 (KRRIRRERNKMAAAKCRNRRR). Positions 119 to 147 (LQAETDQLEEEKSALQAEIANLLKEKEKL) are leucine-zipper. Positions 298 to 322 (AAHRKGSSSNEPSSDSLSSPTLLAL) are disordered. The span at 304–316 (SSSNEPSSDSLSS) shows a compositional bias: low complexity.

The protein belongs to the bZIP family. Fos subfamily.

Its subcellular location is the host nucleus. The chain is p55-v-Fos-transforming protein (V-FOS) from Galliformes.